The primary structure comprises 200 residues: Large ribosomal subunit protein uL4 (200 aa).

Positions 38-68 (GRQGSKQQKTRSDVRGGGKRPWRQKGTGRAR) are disordered. Residues 54-65 (GGKRPWRQKGTG) are compositionally biased toward basic residues.

This sequence belongs to the universal ribosomal protein uL4 family. As to quaternary structure, part of the 50S ribosomal subunit.

Functionally, one of the primary rRNA binding proteins, this protein initially binds near the 5'-end of the 23S rRNA. It is important during the early stages of 50S assembly. It makes multiple contacts with different domains of the 23S rRNA in the assembled 50S subunit and ribosome. Forms part of the polypeptide exit tunnel. The polypeptide is Large ribosomal subunit protein uL4 (Pseudomonas fluorescens (strain SBW25)).